We begin with the raw amino-acid sequence, 483 residues long: UDP-N-acetylmuramoyl-L-alanyl-D-glutamate--2,6-diaminopimelate ligase (483 aa).

A UDP-N-acetyl-alpha-D-muramoyl-L-alanyl-D-glutamate-binding site is contributed by Ser30. 109-115 contacts ATP; that stretch reads GTNGKTT. UDP-N-acetyl-alpha-D-muramoyl-L-alanyl-D-glutamate contacts are provided by residues 151–152, Ser178, and Arg186; that span reads TT. Lys218 carries the post-translational modification N6-carboxylysine. Residues Arg380, 403-406, Gly453, and Glu457 contribute to the meso-2,6-diaminopimelate site; that span reads DNPR. Residues 403 to 406 carry the Meso-diaminopimelate recognition motif motif; it reads DNPR.

Belongs to the MurCDEF family. MurE subfamily. It depends on Mg(2+) as a cofactor. In terms of processing, carboxylation is probably crucial for Mg(2+) binding and, consequently, for the gamma-phosphate positioning of ATP.

It localises to the cytoplasm. The enzyme catalyses UDP-N-acetyl-alpha-D-muramoyl-L-alanyl-D-glutamate + meso-2,6-diaminopimelate + ATP = UDP-N-acetyl-alpha-D-muramoyl-L-alanyl-gamma-D-glutamyl-meso-2,6-diaminopimelate + ADP + phosphate + H(+). It functions in the pathway cell wall biogenesis; peptidoglycan biosynthesis. Its function is as follows. Catalyzes the addition of meso-diaminopimelic acid to the nucleotide precursor UDP-N-acetylmuramoyl-L-alanyl-D-glutamate (UMAG) in the biosynthesis of bacterial cell-wall peptidoglycan. This chain is UDP-N-acetylmuramoyl-L-alanyl-D-glutamate--2,6-diaminopimelate ligase, found in Chlamydia caviae (strain ATCC VR-813 / DSM 19441 / 03DC25 / GPIC) (Chlamydophila caviae).